A 432-amino-acid chain; its full sequence is Adenylosuccinate synthetase (432 aa).

Residues 13 to 19 (GDEGKGK) and 41 to 43 (GHT) each bind GTP. Aspartate 14 serves as the catalytic Proton acceptor. The Mg(2+) site is built by aspartate 14 and glycine 41. Residues 14-17 (DEGK), 39-42 (NAGH), threonine 130, arginine 144, glutamine 225, threonine 240, and arginine 304 contribute to the IMP site. Catalysis depends on histidine 42, which acts as the Proton donor. 300 to 306 (AVTGRPR) lines the substrate pocket. Residues arginine 306, 332–334 (KLD), and 415–417 (STG) contribute to the GTP site.

This sequence belongs to the adenylosuccinate synthetase family. In terms of assembly, homodimer. Requires Mg(2+) as cofactor.

It is found in the cytoplasm. It carries out the reaction IMP + L-aspartate + GTP = N(6)-(1,2-dicarboxyethyl)-AMP + GDP + phosphate + 2 H(+). It participates in purine metabolism; AMP biosynthesis via de novo pathway; AMP from IMP: step 1/2. In terms of biological role, plays an important role in the de novo pathway of purine nucleotide biosynthesis. Catalyzes the first committed step in the biosynthesis of AMP from IMP. The protein is Adenylosuccinate synthetase of Haemophilus influenzae (strain 86-028NP).